The sequence spans 251 residues: Putative F-box protein PP2-B12 (251 aa).

The 46-residue stretch at methionine 1 to phenylalanine 46 folds into the F-box domain.

The chain is Putative F-box protein PP2-B12 (PP2B12) from Arabidopsis thaliana (Mouse-ear cress).